Reading from the N-terminus, the 69-residue chain is Large ribosomal subunit protein bL28 (69 aa).

It belongs to the bacterial ribosomal protein bL28 family.

This Aquifex aeolicus (strain VF5) protein is Large ribosomal subunit protein bL28.